The primary structure comprises 162 residues: MHNMFPALTKTLSLQGYKIINSQTGSAAWSCGRRWFSSDKDDHDDVVTRIKISPIKRTNEPLDKKRARLIYQSRKRGILETDLLLSGFAAKYLKKMNEEELEEYDSLLNELDWDIYYWATKNFKTSPLPDKWANSKLLKQLQEFSENKEKEILSMPDLSKYQ.

The transit peptide at 1 to 35 (MHNMFPALTKTLSLQGYKIINSQTGSAAWSCGRRW) directs the protein to the mitochondrion.

This sequence belongs to the SDHAF2 family. In terms of assembly, interacts with the flavoprotein subunit within the SDH catalytic dimer.

It localises to the mitochondrion matrix. Plays an essential role in the assembly of succinate dehydrogenase (SDH), an enzyme complex (also referred to as respiratory complex II) that is a component of both the tricarboxylic acid (TCA) cycle and the mitochondrial electron transport chain, and which couples the oxidation of succinate to fumarate with the reduction of ubiquinone (coenzyme Q) to ubiquinol. Required for flavinylation (covalent attachment of FAD) of the flavoprotein subunit of the SDH catalytic dimer. This is Succinate dehydrogenase assembly factor 2, mitochondrial from Saccharomyces cerevisiae (strain RM11-1a) (Baker's yeast).